The following is a 683-amino-acid chain: Transcription activator of gluconeogenesis acuK (683 aa).

The disordered stretch occupies residues 1–58; that stretch reads MKTEVNGSAPALAGDHGGVDQDTPDAGDRTEQAKHKTNGATENAPKSANAKDPSRPRR. Residues 65–93 constitute a DNA-binding region (zn(2)-C6 fungal-type); sequence CFACQRAHLTCGDERPCQRCIKRGLQDAC. Disordered regions lie at residues 131-224, 261-328, 351-418, and 537-569; these read LSRN…GPFF, GDSP…LNVS, ESGP…QRNP, and NVNT…ATPG. The segment covering 134-150 has biased composition (low complexity); it reads NGTTTVNTTTQQNSGSN. Polar residues-rich tracts occupy residues 151-218, 264-287, and 314-325; these read YYPT…SQNP, PTDS…TTPL, and WPNSQAPNQGHL. A compositionally biased stretch (low complexity) spans 352-366; the sequence is SGPASFSSPSATTSP. Composition is skewed to polar residues over residues 376-408 and 537-565; these read SLSN…QSLQ and NVNT…TLET.

Belongs to the ERT1/acuK family.

It is found in the nucleus. Functionally, transcription factor which regulates nonfermentable carbon utilization. Activator of gluconeogenetic genes. The chain is Transcription activator of gluconeogenesis acuK (acuK) from Aspergillus fumigatus (strain CBS 144.89 / FGSC A1163 / CEA10) (Neosartorya fumigata).